The chain runs to 160 residues: Transcription elongation factor GreA (160 aa).

The stretch at 49–77 (SEYQSAKDEQAFVEGRIQTLKNMIDNAEI) forms a coiled coil.

The protein belongs to the GreA/GreB family.

Necessary for efficient RNA polymerase transcription elongation past template-encoded arresting sites. The arresting sites in DNA have the property of trapping a certain fraction of elongating RNA polymerases that pass through, resulting in locked ternary complexes. Cleavage of the nascent transcript by cleavage factors such as GreA or GreB allows the resumption of elongation from the new 3'terminus. GreA releases sequences of 2 to 3 nucleotides. The protein is Transcription elongation factor GreA of Leuconostoc mesenteroides subsp. mesenteroides (strain ATCC 8293 / DSM 20343 / BCRC 11652 / CCM 1803 / JCM 6124 / NCDO 523 / NBRC 100496 / NCIMB 8023 / NCTC 12954 / NRRL B-1118 / 37Y).